We begin with the raw amino-acid sequence, 167 residues long: uncharacterized protein (167 aa).

Residues 39–59 form a helical membrane-spanning segment; sequence LSLFSLSPLFLLLSISSLIFS. Residues 92–122 are a coiled coil; that stretch reads LGTQIEMITQAMTTLESRVTDLQQESNDHRT. Residues 134–167 form a disordered region; sequence RDLGDENRPKPTTNKMIATGEQHKGEVSTSLFHD. Positions 154-167 are enriched in basic and acidic residues; the sequence is EQHKGEVSTSLFHD.

The protein localises to the mitochondrion membrane. This is an uncharacterized protein from Arabidopsis thaliana (Mouse-ear cress).